A 209-amino-acid chain; its full sequence is Uracil phosphoribosyltransferase (209 aa).

5-phospho-alpha-D-ribose 1-diphosphate contacts are provided by residues Arg-79, Arg-104, and 131–139; that span reads DPMLATGAS. Residues Ile-194 and 199 to 201 contribute to the uracil site; that span reads GDA. Position 200 (Asp-200) interacts with 5-phospho-alpha-D-ribose 1-diphosphate.

It belongs to the UPRTase family. It depends on Mg(2+) as a cofactor.

The catalysed reaction is UMP + diphosphate = 5-phospho-alpha-D-ribose 1-diphosphate + uracil. It functions in the pathway pyrimidine metabolism; UMP biosynthesis via salvage pathway; UMP from uracil: step 1/1. Its activity is regulated as follows. Allosterically activated by GTP. In terms of biological role, catalyzes the conversion of uracil and 5-phospho-alpha-D-ribose 1-diphosphate (PRPP) to UMP and diphosphate. The chain is Uracil phosphoribosyltransferase from Staphylococcus aureus (strain JH1).